A 388-amino-acid polypeptide reads, in one-letter code: Chorismate synthase (388 aa).

Arg39 and Arg45 together coordinate NADP(+). Residues 130–132 (RSS), 251–252 (NA), Gly296, 311–315 (KPIPT), and Arg337 each bind FMN.

It belongs to the chorismate synthase family. As to quaternary structure, homotetramer. FMNH2 serves as cofactor.

It catalyses the reaction 5-O-(1-carboxyvinyl)-3-phosphoshikimate = chorismate + phosphate. It functions in the pathway metabolic intermediate biosynthesis; chorismate biosynthesis; chorismate from D-erythrose 4-phosphate and phosphoenolpyruvate: step 7/7. Its function is as follows. Catalyzes the anti-1,4-elimination of the C-3 phosphate and the C-6 proR hydrogen from 5-enolpyruvylshikimate-3-phosphate (EPSP) to yield chorismate, which is the branch point compound that serves as the starting substrate for the three terminal pathways of aromatic amino acid biosynthesis. This reaction introduces a second double bond into the aromatic ring system. The chain is Chorismate synthase from Lactococcus lactis subsp. cremoris (strain MG1363).